We begin with the raw amino-acid sequence, 761 residues long: BMP/retinoic acid-inducible neural-specific protein 1 (761 aa).

An N-terminal signal peptide occupies residues 1–19 (MNWRFVELLYFLFIWGRIS). One can recognise an MACPF domain in the interval 68 to 251 (RYKIYREFAR…FVQSALSYIM (184 aa)). N-linked (GlcNAc...) asparagine glycosylation is found at asparagine 156, asparagine 433, asparagine 443, asparagine 553, asparagine 599, asparagine 631, and asparagine 677.

It belongs to the BRINP family. In terms of tissue distribution, highly expressed in brain. Weakly expressed in heart, lung, skeletal muscle, kidney, thymus, prostate, testis and small intestine.

Its subcellular location is the cytoplasm. Its function is as follows. Plays a role in neurogenesis and brain development. May suppress cell cycle progression in postmitotic neurons by inhibiting G1/S transition. In Homo sapiens (Human), this protein is BMP/retinoic acid-inducible neural-specific protein 1 (BRINP1).